We begin with the raw amino-acid sequence, 352 residues long: MDYQVSSPTYDIDYYTSEPCQKVNVKQIAARLLPPLYSLVFIFGFVGNILVVLILINCKRLKSMTDIYLLNLAISDLFFLLTVPFWAHYAAAQWDFGNTMCQLLTGLYFIGFFSGIFFIILLTIDRYLAIVHAVFALKARTVTFGVVTSVITWVVAVFASLPGIIFTRSQREGLHYTCSSHFPYSQYQFWKNFQTLKIVILGLVLPLLVMVICYSGILKTLLRCRNEKKRHRAVRLIFTIMIVYFLFWAPYNIVLLLNTFQEFFGLNNCSSSNRLDQAMQVTETLGMTHCCINPIIYAFVGEKFRNYLLVFFQKHIAKRFCKCCYIFQQEAPERASSVYTRSTGEQEISVGL.

Residues 1–30 (MDYQVSSPTYDIDYYTSEPCQKVNVKQIAA) lie on the Extracellular side of the membrane. Y3 bears the Sulfotyrosine mark. 2 O-linked (GalNAc...) serine glycosylation sites follow: S6 and S7. Sulfotyrosine occurs at positions 10, 14, and 15. 2 cysteine pairs are disulfide-bonded: C20/C269 and C101/C178. The helical transmembrane segment at 31–58 (RLLPPLYSLVFIFGFVGNILVVLILINC) threads the bilayer. At 59–68 (KRLKSMTDIY) the chain is on the cytoplasmic side. A helical membrane pass occupies residues 69–89 (LLNLAISDLFFLLTVPFWAHY). Residues 90 to 102 (AAAQWDFGNTMCQ) lie on the Extracellular side of the membrane. A helical transmembrane segment spans residues 103–124 (LLTGLYFIGFFSGIFFIILLTI). Residues 125 to 141 (DRYLAIVHAVFALKART) are Cytoplasmic-facing. Residues 142-166 (VTFGVVTSVITWVVAVFASLPGIIF) traverse the membrane as a helical segment. The Extracellular segment spans residues 167–198 (TRSQREGLHYTCSSHFPYSQYQFWKNFQTLKI). A helical membrane pass occupies residues 199–218 (VILGLVLPLLVMVICYSGIL). The Cytoplasmic portion of the chain corresponds to 219 to 235 (KTLLRCRNEKKRHRAVR). The chain crosses the membrane as a helical span at residues 236–260 (LIFTIMIVYFLFWAPYNIVLLLNTF). Topologically, residues 261–277 (QEFFGLNNCSSSNRLDQ) are extracellular. The chain crosses the membrane as a helical span at residues 278–301 (AMQVTETLGMTHCCINPIIYAFVG). At 302 to 352 (EKFRNYLLVFFQKHIAKRFCKCCYIFQQEAPERASSVYTRSTGEQEISVGL) the chain is on the cytoplasmic side. 3 S-palmitoyl cysteine lipidation sites follow: C321, C323, and C324. Phosphoserine; by BARK1 occurs at positions 336, 337, 342, and 349.

It belongs to the G-protein coupled receptor 1 family. As to quaternary structure, interacts with PRAF2. Efficient ligand binding to CCL3/MIP-1alpha and CCL4/MIP-1beta requires sulfation, O-glycosylation and sialic acid modifications. Glycosylation on Ser-6 is required for efficient binding of CCL4. Interacts with GRK2. Interacts with ARRB1 and ARRB2. Interacts with CNIH4. Interacts with S100A4; this interaction stimulates T-lymphocyte chemotaxis. Sulfated on at least 2 of the N-terminal tyrosines. Sulfation is required for efficient binding of the chemokines, CCL3 and CCL4. In terms of processing, palmitoylation in the C-terminal is important for cell surface expression. Post-translationally, phosphorylation on serine residues in the C-terminal is stimulated by binding CC chemokines especially by APO-RANTES. O-glycosylated, but not N-glycosylated. Ser-6 appears to be the major site even if Ser-7 may be also O-glycosylated. Also sialylated glycans present which contribute to chemokine binding. Thr-16 and Ser-17 may also be glycosylated and, if so, with small moieties such as a T-antigen.

Its subcellular location is the cell membrane. Functionally, receptor for a number of inflammatory CC-chemokines including CCL3/MIP-1-alpha, CCL4/MIP-1-beta and RANTES and subsequently transduces a signal by increasing the intracellular calcium ion level. May play a role in the control of granulocytic lineage proliferation or differentiation. Participates in T-lymphocyte migration to the infection site by acting as a chemotactic receptor. This Rhinopithecus bieti (Black snub-nosed monkey) protein is C-C chemokine receptor type 5 (CCR5).